Consider the following 345-residue polypeptide: Phosphoribosylformylglycinamidine cyclo-ligase (345 aa).

The protein belongs to the AIR synthase family.

Its subcellular location is the cytoplasm. It catalyses the reaction 2-formamido-N(1)-(5-O-phospho-beta-D-ribosyl)acetamidine + ATP = 5-amino-1-(5-phospho-beta-D-ribosyl)imidazole + ADP + phosphate + H(+). Its pathway is purine metabolism; IMP biosynthesis via de novo pathway; 5-amino-1-(5-phospho-D-ribosyl)imidazole from N(2)-formyl-N(1)-(5-phospho-D-ribosyl)glycinamide: step 2/2. The protein is Phosphoribosylformylglycinamidine cyclo-ligase of Shewanella baltica (strain OS185).